Consider the following 483-residue polypeptide: Altronate oxidoreductase (483 aa).

An NAD(+)-binding site is contributed by 18–29; sequence IIQFGEGNFLRA.

The protein belongs to the mannitol dehydrogenase family. UxaB subfamily.

The enzyme catalyses D-altronate + NAD(+) = keto-D-tagaturonate + NADH + H(+). It functions in the pathway carbohydrate metabolism; pentose and glucuronate interconversion. The protein is Altronate oxidoreductase of Cronobacter sakazakii (strain ATCC BAA-894) (Enterobacter sakazakii).